We begin with the raw amino-acid sequence, 224 residues long: Urease accessory protein UreF (224 aa).

This sequence belongs to the UreF family. UreD, UreF and UreG form a complex that acts as a GTP-hydrolysis-dependent molecular chaperone, activating the urease apoprotein by helping to assemble the nickel containing metallocenter of UreC. The UreE protein probably delivers the nickel.

It localises to the cytoplasm. Functionally, required for maturation of urease via the functional incorporation of the urease nickel metallocenter. In Azotobacter vinelandii (strain DJ / ATCC BAA-1303), this protein is Urease accessory protein UreF.